Reading from the N-terminus, the 205-residue chain is Metalloproteinase inhibitor 1 (205 aa).

A signal peptide spans 1–24; the sequence is MMAPFASLASGILLLLSLIASSKA. Cys-25 serves as a coordination point for Zn(2+). The segment at 25-28 is involved in metalloproteinase-binding; the sequence is CSCA. Disulfide bonds link Cys-25–Cys-94, Cys-27–Cys-123, Cys-37–Cys-148, Cys-151–Cys-197, Cys-156–Cys-161, and Cys-169–Cys-189. Residues 25 to 148 form the NTR domain; sequence CSCAPPHPQT…AFSKTYSAGC (124 aa). Asn-54 is a glycosylation site (N-linked (GlcNAc...) asparagine). The tract at residues 91–92 is involved in metalloproteinase-binding; it reads ES. The N-linked (GlcNAc...) asparagine glycan is linked to Asn-102. Ser-179 carries the phosphoserine modification.

The protein belongs to the protease inhibitor I35 (TIMP) family. As to quaternary structure, interacts with MMP1, MMP3, MMP10 and MMP13, but has only very low affinity for MMP14. Interacts with CD63; identified in a complex with CD63 and ITGB1. In terms of processing, the activity of TIMP1 is dependent on the presence of disulfide bonds. Post-translationally, N-glycosylated. Found in fetal and adult tissues. Highest levels are found in bone. Also found in lung, ovary and uterus.

The protein localises to the secreted. Its function is as follows. Metalloproteinase inhibitor that functions by forming one to one complexes with target metalloproteinases, such as collagenases, and irreversibly inactivates them by binding to their catalytic zinc cofactor. Acts on MMP1, MMP2, MMP3, MMP7, MMP8, MMP9, MMP10, MMP11, MMP12, MMP13 and MMP16. Does not act on MMP14. Also functions as a growth factor that regulates cell differentiation, migration and cell death and activates cellular signaling cascades via CD63 and ITGB1. Plays a role in integrin signaling. The sequence is that of Metalloproteinase inhibitor 1 (Timp1) from Mus musculus (Mouse).